A 2467-amino-acid chain; its full sequence is Polyprotein P1234 (2467 aa).

The region spanning 28–257 (EARQVTDNDH…EDRSLLRSWH (230 aa)) is the Alphavirus-like MT domain. The tract at residues 242-261 (GSTIYTEDRSLLRSWHLPNV) is nsP1 membrane-binding. Cysteine 417 carries the S-palmitoyl cysteine; by host lipid modification. Residues 688–839 (DLVDPPFHEF…HDICTEVYHK (152 aa)) enclose the (+)RNA virus helicase ATP-binding domain. 719 to 726 (GVPGSGKS) contributes to the a ribonucleoside 5'-triphosphate binding site. In terms of domain architecture, (+)RNA virus helicase C-terminal spans 840-988 (SISRRCTQTV…LDDWQREHDA (149 aa)). The 320-residue stretch at 1001–1320 (DVFQNKVNVC…VVLDNIYQGS (320 aa)) folds into the Peptidase C9 domain. The nucleolus localization signal stretch occupies residues 1002 to 1021 (VFQNKVNVCWAKALEPVLAT). Cysteine 1010 acts as the For cysteine protease nsP2 activity in catalysis. The Nuclear export signal motif lies at 1054–1063 (TRFFGVDLDS). Histidine 1079 serves as the catalytic For cysteine protease nsP2 activity. The Nuclear localization signal signature appears at 1177–1181 (PGKKV). In terms of domain architecture, Macro spans 1328–1486 (APAYRVIRGD…RIIEAIHRKE (159 aa)). ADP-D-ribose is bound by residues aspartate 1337, asparagine 1351, glycine 1359, glycine 1438, isoleucine 1439, and tyrosine 1440. Positions 1588, 1590, 1613, and 1631 each coordinate Zn(2+). A disordered region spans residues 1798-1833 (RPVPAPRRRPIPSPRSTASAPPVPKPRRTKYQQPPG). Residues 1831-1847 (PPGVARAISEAELDEYI) form a binding to host FXR family members region. Residues 2224-2339 (DPVLETDIAS…HGVVSDTLMA (116 aa)) form the RdRp catalytic domain.

As to quaternary structure, interacts with non-structural protein 3. Interacts with RNA-directed RNA polymerase nsP4. Interacts with protease nsP2. interacts with itself. Interacts with mRNA-capping enzyme nsP1. Interacts with host DDX1. Interacts with host DDX3. Interacts (via C-terminus) with host FXR1; this interaction inhibits the formation of host stress granules on viral mRNAs and the nsp3-FXR1 complexes bind viral RNAs and probably orchestrate the assembly of viral replication complexes. Interacts (via C-terminus) with host FXR2; this interaction inhibits the formation of host stress granules on viral mRNAs and the nsp3-FXR2 complexes bind viral RNAs and probably orchestrate the assembly of viral replication complexes. Interacts (via C-terminus) with host FMR1; this interaction inhibits the formation of host stress granules on viral mRNAs and the nsp3-FMR1 complexes bind viral RNAs and probably orchestrate the assembly of viral replication complexes. In terms of assembly, interacts with mRNA-capping enzyme nsP1. Interacts with protease nsP2. interacts with itself. As to quaternary structure, interacts with RNA-directed RNA polymerase nsP4. Interacts with mRNA-capping enzyme nsP1. Interacts with KPNA1/karyopherin-alpha1; this interaction probably allows the active transport of protease nsP2 into the host nucleus. The cofactor is Mg(2+). Mn(2+) is required as a cofactor. Specific enzymatic cleavages in vivo yield mature proteins. The processing of the polyprotein is temporally regulated. In early stages (1.7 hpi), P1234 is first cleaved in trans through its nsP2 protease activity, releasing P123' and nsP4, which associate to form the early replication complex. At the same time, P1234 is also cut at the nsP1/nsP2 site early in infection but with lower efficiency. After replication of the viral minus-strand RNAs (4 hpi), the polyproteins are cut at the nsP1/nsP2 and nsP2/nsP3 sites very efficiently, preventing accumulation of P123' and P1234 and allowing the formation of the late replication complex. NsP3'/nsP4 site is not cleaved anymore and P34 is produced rather than nsP4. Post-translationally, specific enzymatic cleavages in vivo yield mature proteins. The processing of the polyprotein is temporally regulated. In early stages (1.7 hpi), P123 is cleaved at the nsP1/nsP2 site with low efficiency. After replication of the viral minus-strand RNAs (4 hpi), the polyproteins are cut at the nsP1/nsP2 and nsP2/nsP3 sites very efficiently, preventing accumulation of P123 and allowing the formation of the late replication complex. In terms of processing, specific enzymatic cleavages in vivo yield mature proteins. The processing of the polyprotein is temporally regulated. In early stages (1.7 hpi), P123' is cleaved at the nsP1/nsP2 site with low efficiency. After replication of the viral minus-strand RNAs (4 hpi), the polyproteins are cut at the nsP1/nsP2 and nsP2/nsP3 sites very efficiently, preventing accumulation of P123' and allowing the formation of the late replication complex. Palmitoylated by host palmitoyltransferases ZDHHC2 and ZDHHC19. Post-translationally, phosphorylated by host on serines and threonines. In terms of processing, ubiquitinated; targets the protein for rapid degradation via the ubiquitin system. Nsp4 is present in extremely low quantities due to low frequency of translation through the amber stop-codon and the degradation by the ubiquitin pathway.

It is found in the host cytoplasmic vesicle membrane. The protein resides in the host cell membrane. The protein localises to the host cell projection. It localises to the host filopodium. Its subcellular location is the host nucleus. It is found in the host cytoplasm. The catalysed reaction is GTP + S-adenosyl-L-methionine = N(7)-methyl-GTP + S-adenosyl-L-homocysteine. It carries out the reaction N(7)-methyl-GTP + L-histidyl-[protein] = N(tele)-(N(7)-methylguanosine 5'-phospho)-L-histidyl-[protein] + diphosphate. It catalyses the reaction N(tele)-(N(7)-methylguanosine 5'-phospho)-L-histidyl-[protein] + a 5'-end diphospho-(purine-ribonucleoside) in mRNA + H(+) = a 5'-end (N(7)-methyl 5'-triphosphoguanosine)-(purine-ribonucleoside) in mRNA + L-histidyl-[protein]. The enzyme catalyses a 5'-end triphospho-ribonucleoside in mRNA + H2O = a 5'-end diphospho-ribonucleoside in mRNA + phosphate + H(+). The catalysed reaction is a ribonucleoside 5'-triphosphate + H2O = a ribonucleoside 5'-diphosphate + phosphate + H(+). It carries out the reaction ATP + H2O = ADP + phosphate + H(+). It catalyses the reaction RNA(n) + a ribonucleoside 5'-triphosphate = RNA(n+1) + diphosphate. The enzyme catalyses 4-O-(ADP-D-ribosyl)-L-aspartyl-[protein] + H2O = L-aspartyl-[protein] + ADP-D-ribose + H(+). The catalysed reaction is 5-O-(ADP-D-ribosyl)-L-glutamyl-[protein] + H2O = L-glutamyl-[protein] + ADP-D-ribose + H(+). It carries out the reaction RNA(n) + ATP = RNA(n)-3'-adenine ribonucleotide + diphosphate. It catalyses the reaction ADP-alpha-D-ribose 1''-phosphate + H2O = ADP-D-ribose + phosphate. Its activity is regulated as follows. Inhibited by sinefungin. Inactive precursor of the viral replicase, which is activated by cleavages carried out by the viral protease nsP2. In terms of biological role, the early replication complex formed by the polyprotein P123 and nsP4 synthesizes the minus-strand RNAs (antigenome). Polyprotein P123 is a short-lived polyprotein that accumulates during early stage of infection. As soon P123 is cleaved into mature proteins, the plus-strand RNAs synthesis begins. Functionally, the early replication complex formed by the polyprotein P123' and nsP4 synthesizes minus-strand RNAs (antigenome). Polyprotein P123' is a short-lived polyprotein that accumulates during early stage of infection. As soon P123' is cleaved into mature proteins, the plus-strand RNAs synthesis begins. Its function is as follows. Cytoplasmic capping enzyme that catalyzes two virus-specific reactions: methyltransferase and nsP1 guanylyltransferase. mRNA-capping is necessary since all viral RNAs are synthesized in the cytoplasm, and host capping enzymes are restricted to the nucleus. The enzymatic reaction involves a covalent link between 7-methyl-GMP and nsP1, whereas eukaryotic capping enzymes form a covalent complex only with GMP. NsP1 capping consists in the following reactions: GTP is first methylated into 7-methyl-GMP and then is covalently linked to nsP1 to form the m7GMp-nsP1 complex from which 7-methyl-GMP complex is transferred to the mRNA to create the cap structure. NsP1 is also needed for the initiation of the minus-strand RNAs synthesis. Probably serves as a membrane anchor for the replication complex composed of nsP1-nsP4. Nsp1 is needed for the initiation of the minus-strand RNAs synthesis. Palmitoylated nsP1 is remodeling host cell cytoskeleton, and induces filopodium-like structure formation at the surface of the host cell. Multifunctional protein whose N-terminus is part of the RNA polymerase complex and displays NTPase, RNA triphosphatase and helicase activities. NTPase and RNA triphosphatase are involved in viral RNA capping and helicase keeps a check on the dsRNA replication intermediates. The C-terminus harbors a protease that specifically cleaves the polyproteins and releases the mature proteins. Required for the shutoff of minus-strand RNAs synthesis. Inhibits host translation to ensure maximal viral gene expression and evade host immune response. In terms of biological role, seems to be essential for minus-strand RNAs and subgenomic 26S mRNAs synthesis. Displays mono-ADP-ribosylhydrolase activity. ADP-ribosylation is a post-translational modification that controls various processes of the host cell and the virus probably needs to revert it for optimal viral replication. Binds proteins of FXR and G3BP families and sequesters them into the viral RNA replication complexes thereby inhibiting the formation of host stress granules on viral mRNAs. The nsp3-FXR and nsp3-G3BP complexes bind viral RNAs and probably orchestrate the assembly of viral replication complexes, thanks to the ability of G3BP and FXR family members to self-assemble and bind DNA. Functionally, seems to be essential for minus-strand RNAs and subgenomic 26S mRNAs synthesis. Displays mono-ADP-ribosylhydrolase activity. ADP-ribosylation is a post-translational modification that controls various processes of the host cell and the virus probably needs to revert it for optimal viral replication. Binds proteins of FXR and G3BP families and sequesters them into the viral RNA replication complexes thereby inhibiting the formation of host stress granules on viral mRNAs. The nsp3'-FXR and nsp3-G3BP complexes bind viral RNAs and probably orchestrate the assembly of viral replication complexes, thanks to the ability of G3BP and FXR family members to self-assemble and bind DNA. Its function is as follows. RNA dependent RNA polymerase. Replicates genomic and antigenomic RNA by recognizing replications specific signals. The early replication complex formed by the polyprotein P123 and nsP4 synthesizes minus-strand RNAs. The late replication complex composed of fully processed nsP1-nsP4 is responsible for the production of genomic and subgenomic plus-strand RNAs. In Western equine encephalitis virus (WEEV), this protein is Polyprotein P1234.